The chain runs to 484 residues: Vanillin dehydrogenase (484 aa).

NADP(+) contacts are provided by residues 156 to 157 (WN), 180 to 183 (KPAS), and 234 to 235 (GS). Residues lysine 180 and 234–239 (GSTPVG) each bind NAD(+). The Proton acceptor role is filled by glutamate 258. Position 259 (leucine 259) interacts with NADP(+). Catalysis depends on cysteine 292, which acts as the Nucleophile. NAD(+) contacts are provided by glutamine 339 and glutamate 386. Glutamate 386 lines the NADP(+) pocket.

The protein belongs to the aldehyde dehydrogenase family. In terms of assembly, exists as a homodimer, homotrimer and homotetramer.

The enzyme catalyses vanillin + NAD(+) + H2O = vanillate + NADH + 2 H(+). The catalysed reaction is vanillin + NADP(+) + H2O = vanillate + NADPH + 2 H(+). It carries out the reaction 3,4-dihydroxybenzaldehyde + NAD(+) + H2O = 3,4-dihydroxybenzoate + NADH + 2 H(+). It catalyses the reaction 3,4-dihydroxybenzaldehyde + NADP(+) + H2O = 3,4-dihydroxybenzoate + NADPH + 2 H(+). The enzyme catalyses 4-hydroxybenzaldehyde + NAD(+) + H2O = 4-hydroxybenzoate + NADH + 2 H(+). The catalysed reaction is 4-hydroxybenzaldehyde + NADP(+) + H2O = 4-hydroxybenzoate + NADPH + 2 H(+). Catalyzes oxidation of vanillin to vanillate. Also oxidizes 3,4-dihydroxybenzaldehyde and 4-hydroxybenzaldehyde significantly. Other aromatic aldehyde substrates in the order of decreasing activity include 3-hydroxybenzaldehyde, 4-nitrobenzaldehyde, terephthalaldehyde, 2,4-dichlorobenzaldehyde, benzaldehyde and 3-phenylpropanal. Low activity with phthalaldehyde, cinnamaldehyde and syringaldehyde. No activity with phenylacetaldehyde, formaldehyde or aldehyde. Active with both NAD(+) and NADP(+). Involved in the degradation pathway of lignin-derived aromatic compounds of plant cell walls. Catalyzes the conversion of vanillin to vanillate due to toxicity of vanillin to the cells. The chain is Vanillin dehydrogenase from Corynebacterium glutamicum (strain ATCC 13032 / DSM 20300 / JCM 1318 / BCRC 11384 / CCUG 27702 / LMG 3730 / NBRC 12168 / NCIMB 10025 / NRRL B-2784 / 534).